Reading from the N-terminus, the 893-residue chain is Alanine--tRNA ligase (893 aa).

Residues His-573, His-577, Cys-676, and His-680 each coordinate Zn(2+). The tract at residues 853-872 (LGGGGGGKDDLAQGGGQDPS) is disordered.

It belongs to the class-II aminoacyl-tRNA synthetase family. Requires Zn(2+) as cofactor.

Its subcellular location is the cytoplasm. It catalyses the reaction tRNA(Ala) + L-alanine + ATP = L-alanyl-tRNA(Ala) + AMP + diphosphate. Its function is as follows. Catalyzes the attachment of alanine to tRNA(Ala) in a two-step reaction: alanine is first activated by ATP to form Ala-AMP and then transferred to the acceptor end of tRNA(Ala). Also edits incorrectly charged Ser-tRNA(Ala) and Gly-tRNA(Ala) via its editing domain. This chain is Alanine--tRNA ligase, found in Kineococcus radiotolerans (strain ATCC BAA-149 / DSM 14245 / SRS30216).